A 119-amino-acid chain; its full sequence is Holo-[acyl-carrier-protein] synthase (119 aa).

Residues D8 and E58 each contribute to the Mg(2+) site.

The protein belongs to the P-Pant transferase superfamily. AcpS family. The cofactor is Mg(2+).

The protein resides in the cytoplasm. It catalyses the reaction apo-[ACP] + CoA = holo-[ACP] + adenosine 3',5'-bisphosphate + H(+). In terms of biological role, transfers the 4'-phosphopantetheine moiety from coenzyme A to a Ser of acyl-carrier-protein. This chain is Holo-[acyl-carrier-protein] synthase, found in Bacillus cereus (strain ATCC 14579 / DSM 31 / CCUG 7414 / JCM 2152 / NBRC 15305 / NCIMB 9373 / NCTC 2599 / NRRL B-3711).